Consider the following 378-residue polypeptide: Probable G-protein coupled receptor frpr-1 (378 aa).

Transmembrane regions (helical) follow at residues Leu-47–Leu-67, Leu-85–Leu-105, Ala-120–Ile-140, Val-180–Pro-200, Thr-243–Ile-263, Ile-277–Val-297, and Ser-315–Phe-337.

The protein belongs to the G-protein coupled receptor 1 family.

It localises to the cell membrane. This chain is Probable G-protein coupled receptor frpr-1, found in Caenorhabditis elegans.